Reading from the N-terminus, the 372-residue chain is Adaptive-response sensory kinase SasA (372 aa).

The region spanning 147 to 360 (MVAHELRTPL…CFHFTVPVWQ (214 aa)) is the Histidine kinase domain. The residue at position 150 (His150) is a Phosphohistidine; by autocatalysis.

In terms of assembly, homooligomerizes. Interacts with KaiC. Participates in the KaiBC complex, whose core is composed of a KaiC homohexamer and 6 KaiB.

The catalysed reaction is ATP + protein L-histidine = ADP + protein N-phospho-L-histidine.. Member of the two-component regulatory system SasA/RpaA involved in genome-wide circadian gene expression. One of several clock output pathways. Participates in the Kai clock protein complex, the main circadian regulator in cyanobacteria, via its interaction with KaiC. KaiC enhances the autophosphorylation activity of SasA, which then transfers its phosphate group to RpaA to activate it. In addition to its output function, recruits fold-shifted KaiB (KaiB(fs)) to KaiC to cooperatively form the KaiB(6):KaiC(6) complex (independent of SasA kinase activity). Required for robustness of the circadian rhythm of gene expression and is involved in clock output, also required for adaptation to light/dark cycles. This Prochlorococcus marinus (strain MIT 9301) protein is Adaptive-response sensory kinase SasA.